A 222-amino-acid chain; its full sequence is Adenylate kinase (222 aa).

10–15 is a binding site for ATP; the sequence is GAGKGT. The NMP stretch occupies residues 30–59; it reads STGDMLRAAVKAGTPLGIEAKKVMDAGGLV. Residues Thr31, Arg36, 57-59, 85-88, and Gln92 contribute to the AMP site; these read GLV and GFPR. The segment at 122–159 is LID; it reads GRRVHVASGRTYHVKYNPPKTEGVDDESGEPLIQRDDD. Residues Arg123 and 132–133 each bind ATP; that span reads TY. The disordered stretch occupies residues 138 to 160; the sequence is NPPKTEGVDDESGEPLIQRDDDK. AMP-binding residues include Arg156 and Arg167. Gly207 contacts ATP.

The protein belongs to the adenylate kinase family. In terms of assembly, monomer.

It is found in the cytoplasm. The enzyme catalyses AMP + ATP = 2 ADP. It functions in the pathway purine metabolism; AMP biosynthesis via salvage pathway; AMP from ADP: step 1/1. Its function is as follows. Catalyzes the reversible transfer of the terminal phosphate group between ATP and AMP. Plays an important role in cellular energy homeostasis and in adenine nucleotide metabolism. This chain is Adenylate kinase, found in Ralstonia pickettii (strain 12J).